The chain runs to 391 residues: Processive diacylglycerol beta-glucosyltransferase (391 aa).

Belongs to the glycosyltransferase 28 family. UgtP subfamily.

The protein resides in the cell membrane. It catalyses the reaction a 1,2-diacyl-3-O-(beta-D-glucopyranosyl)-sn-glycerol + UDP-alpha-D-glucose = a 1,2-diacyl-3-O-(beta-D-Glc-(1-&gt;6)-beta-D-Glc)-sn-glycerol + UDP + H(+). It carries out the reaction a 1,2-diacyl-sn-glycerol + UDP-alpha-D-glucose = a 1,2-diacyl-3-O-(beta-D-glucopyranosyl)-sn-glycerol + UDP + H(+). It participates in glycolipid metabolism; diglucosyl-diacylglycerol biosynthesis. Its function is as follows. Processive glucosyltransferase involved in the biosynthesis of both the bilayer- and non-bilayer-forming membrane glucolipids. Is able to successively transfer two glucosyl residues to diacylglycerol (DAG), thereby catalyzing the formation of beta-monoglucosyl-DAG (3-O-(beta-D-glucopyranosyl)-1,2-diacyl-sn-glycerol) and beta-diglucosyl-DAG (3-O-(beta-D-glucopyranosyl-beta-(1-&gt;6)-D-glucopyranosyl)-1,2-diacyl-sn-glycerol). Beta-diglucosyl-DAG is the predominant glycolipid found in Bacillales and is also used as a membrane anchor for lipoteichoic acid (LTA). The polypeptide is Processive diacylglycerol beta-glucosyltransferase (Staphylococcus epidermidis (strain ATCC 35984 / DSM 28319 / BCRC 17069 / CCUG 31568 / BM 3577 / RP62A)).